The following is a 603-amino-acid chain: Serine protease 56 (603 aa).

The signal sequence occupies residues 1–19 (MLLAVLLLLPLPSSWFAHG). The tract at residues 64–96 (SHECRGSGRPRPQALLQDPPEPGPCGERRPSTA) is disordered. An N-linked (GlcNAc...) asparagine glycan is attached at Asn97. The region spanning 105 to 337 (IVGGSAAPPG…FKDWLQEQMS (233 aa)) is the Peptidase S1 domain. Cys130 and Cys146 are disulfide-bonded. Residues His145 and Asp191 each act as charge relay system in the active site. 3 cysteine pairs are disulfide-bonded: Cys225/Cys292, Cys256/Cys271, and Cys282/Cys313. Ser286 acts as the Charge relay system in catalysis. Disordered regions lie at residues 442–474 (PARE…NGCP) and 573–603 (EGPW…ARQP).

The protein belongs to the peptidase S1 family. In terms of tissue distribution, expressed neural retina, cornea, sclera and optic nerve.

Functionally, serine protease required during eye development. This is Serine protease 56 (PRSS56) from Homo sapiens (Human).